The chain runs to 266 residues: Tryptophan synthase alpha chain (266 aa).

Catalysis depends on proton acceptor residues Glu-47 and Asp-58.

This sequence belongs to the TrpA family. As to quaternary structure, tetramer of two alpha and two beta chains.

The catalysed reaction is (1S,2R)-1-C-(indol-3-yl)glycerol 3-phosphate + L-serine = D-glyceraldehyde 3-phosphate + L-tryptophan + H2O. It functions in the pathway amino-acid biosynthesis; L-tryptophan biosynthesis; L-tryptophan from chorismate: step 5/5. In terms of biological role, the alpha subunit is responsible for the aldol cleavage of indoleglycerol phosphate to indole and glyceraldehyde 3-phosphate. This chain is Tryptophan synthase alpha chain, found in Leptospira biflexa serovar Patoc (strain Patoc 1 / Ames).